The chain runs to 354 residues: Src kinase-associated phosphoprotein 1 (354 aa).

The PH domain occupies 107–210; the sequence is NVIKQGYLEK…WVDQISFLLK (104 aa). Phosphotyrosine is present on residues tyrosine 142 and tyrosine 236. Tyrosine 267 and tyrosine 290 each carry phosphotyrosine; by FYN. The segment at 285–290 is interaction with FYB1; the sequence is RRRVDY. The 62-residue stretch at 289–350 folds into the SH3 domain; that stretch reads DYADYYQGLW…PKDYLTTAFE (62 aa).

Belongs to the SKAP family. As to quaternary structure, homodimer. Interacts with FYN. Interacts with PTPRC. Interacts with GRB2 when phosphorylated on Tyr-267. Interacts with FYB1, which is required for SKAP2 protein stability. Part of a complex consisting of SKAP1, FYB1 and CLNK. Interacts with RASGRP1. Interacts with FYB2. Phosphorylated on tyrosines. Phosphorylation by FYN on Tyr-267 is required for GRB2 interaction. Phosphorylation by FYN on Tyr-290 abolishes interaction with FYB1. Tyr-236 is dephosphorylated by PTPRC. In terms of tissue distribution, expressed in mast cells (at protein level).

It is found in the cytoplasm. Its subcellular location is the nucleus. It localises to the cell membrane. Functionally, positively regulates T-cell receptor signaling by enhancing the MAP kinase pathway. Required for optimal conjugation between T-cells and antigen-presenting cells by promoting the clustering of integrin ITGAL on the surface of T-cells. May be involved in high affinity immunoglobulin epsilon receptor signaling in mast cells. This chain is Src kinase-associated phosphoprotein 1 (Skap1), found in Rattus norvegicus (Rat).